The sequence spans 140 residues: ATP synthase epsilon chain (140 aa).

The protein belongs to the ATPase epsilon chain family. F-type ATPases have 2 components, CF(1) - the catalytic core - and CF(0) - the membrane proton channel. CF(1) has five subunits: alpha(3), beta(3), gamma(1), delta(1), epsilon(1). CF(0) has three main subunits: a, b and c.

It is found in the cell inner membrane. In terms of biological role, produces ATP from ADP in the presence of a proton gradient across the membrane. The chain is ATP synthase epsilon chain from Neisseria meningitidis serogroup C (strain 053442).